We begin with the raw amino-acid sequence, 422 residues long: Enolase (422 aa).

Gln-162 serves as a coordination point for (2R)-2-phosphoglycerate. Residue Glu-204 is the Proton donor of the active site. Asp-241, Glu-284, and Asp-311 together coordinate Mg(2+). Lys-336, Arg-365, Ser-366, and Lys-387 together coordinate (2R)-2-phosphoglycerate. Lys-336 functions as the Proton acceptor in the catalytic mechanism.

The protein belongs to the enolase family. Requires Mg(2+) as cofactor.

Its subcellular location is the cytoplasm. The protein resides in the secreted. It is found in the cell surface. It carries out the reaction (2R)-2-phosphoglycerate = phosphoenolpyruvate + H2O. Its pathway is carbohydrate degradation; glycolysis; pyruvate from D-glyceraldehyde 3-phosphate: step 4/5. Its function is as follows. Catalyzes the reversible conversion of 2-phosphoglycerate (2-PG) into phosphoenolpyruvate (PEP). It is essential for the degradation of carbohydrates via glycolysis. The protein is Enolase of Thermus thermophilus (strain ATCC 27634 / DSM 579 / HB8).